A 239-amino-acid chain; its full sequence is 4-hydroxy-tetrahydrodipicolinate reductase (239 aa).

NAD(+) is bound by residues 8-13, 78-80, and 102-105; these read GSTGKM, GTT, and SANM. The active-site Proton donor/acceptor is H134. H135 contributes to the (S)-2,3,4,5-tetrahydrodipicolinate binding site. K138 functions as the Proton donor in the catalytic mechanism. (S)-2,3,4,5-tetrahydrodipicolinate is bound at residue 144–145; the sequence is GT.

Belongs to the DapB family.

It localises to the cytoplasm. It carries out the reaction (S)-2,3,4,5-tetrahydrodipicolinate + NAD(+) + H2O = (2S,4S)-4-hydroxy-2,3,4,5-tetrahydrodipicolinate + NADH + H(+). It catalyses the reaction (S)-2,3,4,5-tetrahydrodipicolinate + NADP(+) + H2O = (2S,4S)-4-hydroxy-2,3,4,5-tetrahydrodipicolinate + NADPH + H(+). It participates in amino-acid biosynthesis; L-lysine biosynthesis via DAP pathway; (S)-tetrahydrodipicolinate from L-aspartate: step 4/4. In terms of biological role, catalyzes the conversion of 4-hydroxy-tetrahydrodipicolinate (HTPA) to tetrahydrodipicolinate. In Rickettsia peacockii (strain Rustic), this protein is 4-hydroxy-tetrahydrodipicolinate reductase.